We begin with the raw amino-acid sequence, 279 residues long: NADPH-dependent 7-cyano-7-deazaguanine reductase (279 aa).

Residue 86–88 coordinates substrate; the sequence is IES. 88–89 contributes to the NADPH binding site; the sequence is SK. The active-site Thioimide intermediate is Cys187. The Proton donor role is filled by Asp194. 226–227 provides a ligand contact to substrate; it reads HE. 255–256 is a binding site for NADPH; sequence RG.

Belongs to the GTP cyclohydrolase I family. QueF type 2 subfamily. As to quaternary structure, homodimer.

The protein resides in the cytoplasm. The catalysed reaction is 7-aminomethyl-7-carbaguanine + 2 NADP(+) = 7-cyano-7-deazaguanine + 2 NADPH + 3 H(+). It functions in the pathway tRNA modification; tRNA-queuosine biosynthesis. Functionally, catalyzes the NADPH-dependent reduction of 7-cyano-7-deazaguanine (preQ0) to 7-aminomethyl-7-deazaguanine (preQ1). This chain is NADPH-dependent 7-cyano-7-deazaguanine reductase, found in Actinobacillus pleuropneumoniae serotype 3 (strain JL03).